The chain runs to 993 residues: Muscular LMNA-interacting protein (993 aa).

The interval 1–51 is interaction with LMNA; sequence MLSEQGLLSDCGNNYFQMTSCILSGSIQTTPQVSAGGSEAKPLIFTFVPTV. A disordered region spans residues 71–90; the sequence is PEESSDKSPETVNRSKSNDY. Over residues 80–90 the composition is skewed to polar residues; sequence ETVNRSKSNDY. A Phosphoserine modification is found at Ser146. Disordered stretches follow at residues 152 to 171, 186 to 225, 231 to 250, 300 to 322, 334 to 358, 443 to 481, 500 to 582, 677 to 711, and 811 to 864; these read AASRKVEQGPPGGIGTAAVR, VRPKTQGTDLKTSSHPEMLHGMAPQQKHGQLTSSPTTSEQ, PAFSFVSPTNPNTPPDPVNL, PHSTQLSGSNLPSSTAADPKPGL, SHVLSHGESPRTSSSPPSSSASLKS, SPASSTLTLDQKEKQTPPTPKKSLSSCSLRAGSPDQGEL, TPLS…IHTY, SALHPHCGSGTLPSRLGKSESTTPNHRSPVSTPSL, and LSMH…SQLT. The interval 161 to 837 is required for interaction with ISL1; sequence PPGGIGTAAV…GSDTVKTPTT (677 aa). Positions 212-225 are enriched in polar residues; the sequence is KHGQLTSSPTTSEQ. Residues 300-315 show a composition bias toward polar residues; it reads PHSTQLSGSNLPSSTA. A compositionally biased stretch (low complexity) spans 343 to 358; sequence PRTSSSPPSSSASLKS. Positions 500–532 are enriched in polar residues; the sequence is TPLSQAPSLSPTKQASSSLASMNVERTPSPTLK. The span at 533-563 shows a compositional bias: low complexity; it reads SNTMLSLLQTSTSSSVGLPPVPPSSSLSSLK. Residues 564–574 show a composition bias toward basic and acidic residues; the sequence is SKQDGDLRGPE. The segment covering 695–711 has biased composition (polar residues); the sequence is SESTTPNHRSPVSTPSL. Low complexity predominate over residues 811–822; it reads LSMHSSDSPSRS. Phosphoserine is present on Ser818. Over residues 849-864 the composition is skewed to polar residues; the sequence is ANLSSPSSTVSESQLT.

In terms of assembly, directly interacts with LMNA. Interacts with ISL1 (via N-terminal domain); the interaction represses ISL1 transactivator activity. Interactions of ISL1 with MLIP1 and GCN5/KAT2A may be mutually exclusive. Predominantly expressed in the heart and skeletal muscle. Also detected in liver. In terms of tissue distribution, expressed in skeletal muscle.

The protein localises to the nucleus. The protein resides in the nucleus envelope. It localises to the PML body. It is found in the cytoplasm. Its subcellular location is the cytosol. The protein localises to the cell membrane. The protein resides in the sarcolemma. Its function is as follows. Required for myoblast differentiation into myotubes, possibly acting as a transcriptional regulator of the myogenic program. Required for cardiac adaptation to stress through integrated regulation of the AKT/mTOR pathways and FOXO1. Regulates cardiac homeostasis and plays a role in the protection against cardiac hypertrophy. Binds chromatin. May act as a transcriptional cofactor for ISL1, repressing its transcriptional activity. May also repress MYOCD transcriptional activity. The protein is Muscular LMNA-interacting protein of Homo sapiens (Human).